The following is a 399-amino-acid chain: Beta-1,4-galactosyltransferase 1 (399 aa).

Residues 1–24 (MRFREQFLGGSAAMPGATLQRACR) lie on the Cytoplasmic side of the membrane. A helical; Signal-anchor for type II membrane protein membrane pass occupies residues 25 to 44 (LLVAVCALHLGVTLVYYLSG). At 45–399 (RDLSRLPQLV…QITVDIGTPR (355 aa)) the chain is on the lumenal side. A disordered region spans residues 61–113 (QGGTNGAAASKQPPGEQRPRGARPPPPLGVSPKPRPGLDSSPGAASGPGLKSN). The span at 82-95 (ARPPPPLGVSPKPR) shows a compositional bias: pro residues. An N-linked (GlcNAc...) asparagine glycan is attached at Asn-113. An intrachain disulfide couples Cys-131 to Cys-173. UDP-alpha-D-galactose contacts are provided by residues 184–188 (PFRNR), 223–225 (FNR), 250–251 (VD), and Trp-311. An intrachain disulfide couples Cys-244 to Cys-263. Asp-251 is a Mn(2+) binding site. Position 313 to 316 (313 to 316 (GEDD)) interacts with N-acetyl-D-glucosamine. His-344 provides a ligand contact to Mn(2+). 344–346 (HSR) contributes to the UDP-alpha-D-galactose binding site. Arg-356 lines the N-acetyl-D-glucosamine pocket.

This sequence belongs to the glycosyltransferase 7 family. As to quaternary structure, homodimer; and heterodimer with alpha-lactalbumin to form lactose synthase. Interacts (via N-terminal cytoplasmic domain) with UBE2Q1 (via N-terminus); the interaction is direct. It depends on Mn(2+) as a cofactor. Post-translationally, the soluble form derives from the membrane forms by proteolytic processing.

It localises to the golgi apparatus. The protein resides in the golgi stack membrane. Its subcellular location is the cell membrane. It is found in the cell surface. The protein localises to the cell projection. It localises to the filopodium. The protein resides in the secreted. It catalyses the reaction D-glucose + UDP-alpha-D-galactose = lactose + UDP + H(+). The enzyme catalyses an N-acetyl-beta-D-glucosaminyl derivative + UDP-alpha-D-galactose = a beta-D-galactosyl-(1-&gt;4)-N-acetyl-beta-D-glucosaminyl derivative + UDP + H(+). The catalysed reaction is N-acetyl-D-glucosamine + UDP-alpha-D-galactose = beta-D-galactosyl-(1-&gt;4)-N-acetyl-D-glucosamine + UDP + H(+). It carries out the reaction a beta-D-GlcNAc-(1-&gt;3)-beta-D-Gal-(1-&gt;4)-beta-D-Glc-(1&lt;-&gt;1)-Cer(d18:1(4E)) + UDP-alpha-D-galactose = a neolactoside nLc4Cer(d18:1(4E)) + UDP + H(+). It catalyses the reaction a beta-D-glucosylceramide + UDP-alpha-D-galactose = a beta-D-galactosyl-(1-&gt;4)-beta-D-glucosyl-(1&lt;-&gt;1)-ceramide + UDP + H(+). The enzyme catalyses a neolactoside IV(3)-beta-GlcNAc-nLc4Cer + UDP-alpha-D-galactose = a neolactoside nLc6Cer + UDP + H(+). Its pathway is protein modification; protein glycosylation. Its function is as follows. The Golgi complex form catalyzes the production of lactose in the lactating mammary gland and could also be responsible for the synthesis of complex-type N-linked oligosaccharides in many glycoproteins as well as the carbohydrate moieties of glycolipids. Functionally, the cell surface form functions as a recognition molecule during a variety of cell to cell and cell to matrix interactions, as those occurring during development and egg fertilization, by binding to specific oligosaccharide ligands on opposing cells or in the extracellular matrix. The secreted form is responsible for the synthesis of complex-type to N-linked oligosaccharides in many glycoproteins as well as the carbohydrate moieties of glycolipids. This chain is Beta-1,4-galactosyltransferase 1, found in Mus musculus (Mouse).